Consider the following 103-residue polypeptide: Phosphoribosyl-ATP pyrophosphatase (103 aa).

The protein belongs to the PRA-PH family.

It localises to the cytoplasm. It catalyses the reaction 1-(5-phospho-beta-D-ribosyl)-ATP + H2O = 1-(5-phospho-beta-D-ribosyl)-5'-AMP + diphosphate + H(+). It functions in the pathway amino-acid biosynthesis; L-histidine biosynthesis; L-histidine from 5-phospho-alpha-D-ribose 1-diphosphate: step 2/9. This chain is Phosphoribosyl-ATP pyrophosphatase, found in Listeria monocytogenes serotype 4a (strain HCC23).